A 1197-amino-acid chain; its full sequence is DNA-directed RNA polymerase subunit beta (1197 aa).

This sequence belongs to the RNA polymerase beta chain family. In terms of assembly, the RNAP catalytic core consists of 2 alpha, 1 beta, 1 beta' and 1 omega subunit. When a sigma factor is associated with the core the holoenzyme is formed, which can initiate transcription.

It catalyses the reaction RNA(n) + a ribonucleoside 5'-triphosphate = RNA(n+1) + diphosphate. In terms of biological role, DNA-dependent RNA polymerase catalyzes the transcription of DNA into RNA using the four ribonucleoside triphosphates as substrates. The sequence is that of DNA-directed RNA polymerase subunit beta from Streptococcus pyogenes serotype M12 (strain MGAS9429).